Consider the following 65-residue polypeptide: Small ribosomal subunit protein bS21 (65 aa).

This sequence belongs to the bacterial ribosomal protein bS21 family.

The chain is Small ribosomal subunit protein bS21 from Chlorobium limicola (strain DSM 245 / NBRC 103803 / 6330).